An 80-amino-acid polypeptide reads, in one-letter code: FXYD domain-containing ion transport regulator 7 (80 aa).

The Extracellular portion of the chain corresponds to 1–22; it reads MATPTQSPTNVPEETDPFFYDY. 3 O-linked (GlcNAc) threonine glycosylation sites follow: Thr-3, Thr-5, and Thr-9. The chain crosses the membrane as a helical span at residues 23–45; sequence ATVQTVGMTLATIMFVLGIIIII. The Cytoplasmic segment spans residues 46–80; the sequence is SKKVKCRKADSRSESPTCKSCKSELPSSAPGGGGV. The interval 56-80 is disordered; sequence SRSESPTCKSCKSELPSSAPGGGGV. Ser-73 bears the Phosphoserine mark.

Belongs to the FXYD family. In terms of assembly, regulatory subunit of the sodium/potassium-transporting ATPase which is composed of a catalytic alpha subunit, a non-catalytic beta subunit and an additional regulatory subunit. The regulatory subunit, a member of the FXYD protein family, modulates the enzymatic activity in a tissue- and isoform-specific way by changing affinities of the Na+/K+-ATPase toward Na(+), K(+) or ATP. O-glycosylated; required for stabilization and translocation to the plasma membrane. As to expression, expressed specifically in brain. Expressed in both neurons and glia.

The protein resides in the cell membrane. In terms of biological role, associates with and regulates the activity of the sodium/potassium-transporting ATPase (NKA) which catalyzes the hydrolysis of ATP coupled with the exchange of Na(+) and K(+) ions across the plasma membrane. Reduces the apparent affinity for external K(+), an effect that depends on the presence of external Na(+) and voltage. Increases the apparent affinity for intracellular Na(+). This Rattus norvegicus (Rat) protein is FXYD domain-containing ion transport regulator 7 (Fxyd7).